The sequence spans 156 residues: Endoribonuclease YbeY (156 aa).

Positions 117, 121, and 127 each coordinate Zn(2+).

The protein belongs to the endoribonuclease YbeY family. It depends on Zn(2+) as a cofactor.

It localises to the cytoplasm. Functionally, single strand-specific metallo-endoribonuclease involved in late-stage 70S ribosome quality control and in maturation of the 3' terminus of the 16S rRNA. The protein is Endoribonuclease YbeY of Shewanella pealeana (strain ATCC 700345 / ANG-SQ1).